Reading from the N-terminus, the 369-residue chain is Aminomethyltransferase (369 aa).

The protein belongs to the GcvT family. In terms of assembly, the glycine cleavage system is composed of four proteins: P, T, L and H.

It carries out the reaction N(6)-[(R)-S(8)-aminomethyldihydrolipoyl]-L-lysyl-[protein] + (6S)-5,6,7,8-tetrahydrofolate = N(6)-[(R)-dihydrolipoyl]-L-lysyl-[protein] + (6R)-5,10-methylene-5,6,7,8-tetrahydrofolate + NH4(+). In terms of biological role, the glycine cleavage system catalyzes the degradation of glycine. This chain is Aminomethyltransferase, found in Rippkaea orientalis (strain PCC 8801 / RF-1) (Cyanothece sp. (strain PCC 8801)).